A 178-amino-acid chain; its full sequence is Large ribosomal subunit protein uL6 (178 aa).

Belongs to the universal ribosomal protein uL6 family. In terms of assembly, part of the 50S ribosomal subunit.

In terms of biological role, this protein binds to the 23S rRNA, and is important in its secondary structure. It is located near the subunit interface in the base of the L7/L12 stalk, and near the tRNA binding site of the peptidyltransferase center. This chain is Large ribosomal subunit protein uL6, found in Helicobacter pylori (strain G27).